We begin with the raw amino-acid sequence, 429 residues long: Glutamate-1-semialdehyde 2,1-aminomutase 2 (429 aa).

Lys268 carries the N6-(pyridoxal phosphate)lysine modification.

This sequence belongs to the class-III pyridoxal-phosphate-dependent aminotransferase family. HemL subfamily. In terms of assembly, homodimer. The cofactor is pyridoxal 5'-phosphate.

It is found in the cytoplasm. The enzyme catalyses (S)-4-amino-5-oxopentanoate = 5-aminolevulinate. It functions in the pathway porphyrin-containing compound metabolism; protoporphyrin-IX biosynthesis; 5-aminolevulinate from L-glutamyl-tRNA(Glu): step 2/2. The polypeptide is Glutamate-1-semialdehyde 2,1-aminomutase 2 (Geobacillus kaustophilus (strain HTA426)).